The primary structure comprises 697 residues: MNKRGLYSKLGISVVGISLLMGVPTLIHANELNYGQLSISPIFQGGSYQLNNKSIDISSLLLDKLSGESQTVVMKFKADKPNSLQALFGLSNSKAGFKNNYFSIFMRDSGEIGVEIRDAQKGINYLFSRPASLWGKHKGQAVENTLVFVSDSKDKTYTMYVNGIEVFSETVDTFLPISNINGIDKATLGAVNREGKEHYLAKGSIDEISLFNKAISDQEVSTIPLSNPFQLIFQSGDSTQANYFRIPTLYTLSSGRVLSSIDARYGGTHDSKSKINIATSYSDDNGKTWSEPIFAMKFNDYEEQLVYWPRDNKLKNSQISGSASFIDSSIVEDKKSGKTILLADVMPAGIGNNNANKADSGFKEINGHYYLKLKKNGDNDFRYTVRENGVVYNETTNKPTNYTINDKYEVLEGGKSLTVEQYSVDFDSGSLRERHNGKQVPMNVFYKDSLFKVTPTNYIAMTTSQNRGESWEQFKLLPPFLGEKHNGTYLCPGQGLALKSSNRLIFATYTSGELTYLISDDSGQTWKKSSASIPFKNATAEAQMVELRDGVIRTFFRTTTGKIAYMTSRDSGETWSKVSYIDGIQQTSYGTQVSAIKYSQLIDGKEAVILSTPNSRSGRKGGQLVVGLVNKEDDSIDWKYHYDIDLPSYGYAYSAITELPNHHIGVLFEKYDSWSRNELHLSNVVQYIDLEINDLTK.

Residues 1–29 (MNKRGLYSKLGISVVGISLLMGVPTLIHA) form the signal peptide. Residue Arg245 coordinates substrate. The active-site Proton acceptor is the Asp270. BNR repeat units follow at residues 280 to 291 (SYSDDNGKTWSE), 462 to 473 (TTSQNRGESWEQ), and 517 to 528 (LISDDSGQTWKK). Glu541 is a catalytic residue. Arg557 lines the substrate pocket. The stretch at 566–577 (MTSRDSGETWSK) is one BNR 4 repeat. Arg619 lines the substrate pocket. Catalysis depends on Tyr653, which acts as the Nucleophile.

Belongs to the glycosyl hydrolase 33 family.

The enzyme catalyses Hydrolysis of alpha-(2-&gt;3)-, alpha-(2-&gt;6)-, alpha-(2-&gt;8)- glycosidic linkages of terminal sialic acid residues in oligosaccharides, glycoproteins, glycolipids, colominic acid and synthetic substrates.. The chain is Sialidase B (nanB) from Streptococcus pneumoniae serotype 4 (strain ATCC BAA-334 / TIGR4).